The primary structure comprises 236 residues: Ribose-5-phosphate isomerase A 2 (236 aa).

Substrate is bound by residues 31-34 (SGTT), 86-89 (DGPD), and 99-102 (KGGG). Glutamate 108 functions as the Proton acceptor in the catalytic mechanism. Lysine 126 provides a ligand contact to substrate.

Belongs to the ribose 5-phosphate isomerase family. As to quaternary structure, homodimer.

The catalysed reaction is aldehydo-D-ribose 5-phosphate = D-ribulose 5-phosphate. The protein operates within carbohydrate degradation; pentose phosphate pathway; D-ribose 5-phosphate from D-ribulose 5-phosphate (non-oxidative stage): step 1/1. In terms of biological role, catalyzes the reversible conversion of ribose-5-phosphate to ribulose 5-phosphate. In Yersinia pestis, this protein is Ribose-5-phosphate isomerase A 2.